The following is a 344-amino-acid chain: Intraflagellar transport protein 46 (344 aa).

Residues 1–16 show a composition bias toward acidic residues; the sequence is MDDSMDYPDRDGDDLD. Residues 1-100 are disordered; the sequence is MDDSMDYPDR…IANSDEAPPG (100 aa). The segment covering 18–30 has biased composition (polar residues); that stretch reads FQGTARSQVVQNQ.

The protein belongs to the IFT46 family. Component of the IFT complex B, the core composed of IFT25, IFT27, IFT46, IFT52, IFT74, IFT81 and IFT88 as well as associated subunits IFT20, IFT57, IFT80 and IFT172. Interacts with IFT25, IFT52, IFT70, IFT88 and DAW1.

The protein resides in the cytoplasm. It localises to the cytoskeleton. The protein localises to the cilium basal body. It is found in the cell projection. Its subcellular location is the cilium. In terms of biological role, forms part of a complex involved in intraflagellar transport (IFT), the bi-directional movement of particles required for the assembly, maintenance and functioning of primary cilia. Plays a role in maintaining IFT complex B stability. The sequence is that of Intraflagellar transport protein 46 from Chlamydomonas reinhardtii (Chlamydomonas smithii).